Consider the following 513-residue polypeptide: Arabinoxylan arabinofuranohydrolase (513 aa).

Residues 1 to 26 (MRKKCSVCLWILVLLLSCLSGKSAYA) form the signal peptide. Asp-50 (proton acceptor) is an active-site residue. The Proton donor role is filled by Glu-251. Residue Asn-314 participates in substrate binding. A CBM6 domain is found at 382 to 511 (NRVEAETFAW…LFNFDYWQFT (130 aa)). Ca(2+)-binding residues include Glu-385, Glu-387, Asn-409, Gln-410, and Asp-506.

Its subcellular location is the secreted. The catalysed reaction is Hydrolysis of terminal non-reducing alpha-L-arabinofuranoside residues in alpha-L-arabinosides.. It functions in the pathway glycan degradation; xylan degradation. In terms of biological role, cleaves arabinose units from O-2- or O-3-monosubstituted xylose residues, thereby assisting in arabinoxylan (AX) and short-chain arabinoxylo-oligosaccharide (AXOS) degradation. Is more active on wheat bran AXOS than on wheat water-extractable AX and rye water-extractable AX. Does not display endoxylanase, xylosidase or arabinanase activity. The chain is Arabinoxylan arabinofuranohydrolase (xynD) from Bacillus subtilis (strain 168).